Reading from the N-terminus, the 168-residue chain is Chorismate pyruvate-lyase (168 aa).

Substrate contacts are provided by methionine 36, arginine 78, leucine 116, and glutamate 157.

The protein belongs to the UbiC family. In terms of assembly, monomer.

It is found in the cytoplasm. The enzyme catalyses chorismate = 4-hydroxybenzoate + pyruvate. The protein operates within cofactor biosynthesis; ubiquinone biosynthesis. Functionally, removes the pyruvyl group from chorismate, with concomitant aromatization of the ring, to provide 4-hydroxybenzoate (4HB) for the ubiquinone pathway. The protein is Chorismate pyruvate-lyase of Yersinia enterocolitica serotype O:8 / biotype 1B (strain NCTC 13174 / 8081).